Consider the following 61-residue polypeptide: Large ribosomal subunit protein uL30 (61 aa).

It belongs to the universal ribosomal protein uL30 family. In terms of assembly, part of the 50S ribosomal subunit.

The sequence is that of Large ribosomal subunit protein uL30 from Mycolicibacterium gilvum (strain PYR-GCK) (Mycobacterium gilvum (strain PYR-GCK)).